Reading from the N-terminus, the 106-residue chain is Cell division protein FtsB (106 aa).

Residues 1-3 (MGK) lie on the Cytoplasmic side of the membrane. A helical membrane pass occupies residues 4–21 (LTLLLLVLLGWLQYSLWL). The Periplasmic segment spans residues 22-106 (GKNGIHDFVR…GTPSTQNNAQ (85 aa)). The stretch at 31–62 (RVKEDVAAQEANNSTLKARNDQLFAEIDDLNG) forms a coiled coil.

This sequence belongs to the FtsB family. Part of a complex composed of FtsB, FtsL and FtsQ.

The protein resides in the cell inner membrane. Essential cell division protein. May link together the upstream cell division proteins, which are predominantly cytoplasmic, with the downstream cell division proteins, which are predominantly periplasmic. The protein is Cell division protein FtsB of Yersinia pseudotuberculosis serotype O:1b (strain IP 31758).